The chain runs to 293 residues: Nucleotide-binding protein OB2468 (293 aa).

An ATP-binding site is contributed by 14 to 21 (GMSGAGKT). A GTP-binding site is contributed by 65–68 (DLRG).

Belongs to the RapZ-like family.

Displays ATPase and GTPase activities. The chain is Nucleotide-binding protein OB2468 from Oceanobacillus iheyensis (strain DSM 14371 / CIP 107618 / JCM 11309 / KCTC 3954 / HTE831).